The following is a 2115-amino-acid chain: Non-reducing polyketide synthase ascC (2115 aa).

The disordered stretch occupies residues 1-21 (MTLIQTKHSASAAVFSPQSTA). The tract at residues 14–260 (VFSPQSTAPK…HNSRNTELAQ (247 aa)) is N-terminal acylcarrier protein transacylase domain (SAT). Positions 381 to 805 (PDSIAIVGSA…GSNSALICSE (425 aa)) constitute a Ketosynthase family 3 (KS3) domain. Residues cysteine 553, histidine 689, and histidine 728 each act as for beta-ketoacyl synthase activity in the active site. The malonyl-CoA:ACP transacylase (MAT) domain stretch occupies residues 908 to 1210 (LTFSGQSRTT…ANPSAHTFQA (303 aa)). Residue serine 995 is the For acyl/malonyl transferase activity of the active site. An N-terminal hotdog fold region spans residues 1280-1406 (PKKVQQLVTL…GDFFATSGEM (127 aa)). Positions 1280–1581 (PKKVQQLVTL…FMRIKAAKLE (302 aa)) constitute a PKS/mFAS DH domain. Residues 1285 to 1580 (QLVTLKKTEG…QFMRIKAAKL (296 aa)) form a product template (PT) domain region. Residue histidine 1315 is the Proton acceptor; for dehydratase activity of the active site. A C-terminal hotdog fold region spans residues 1428–1581 (DAERLRTATA…FMRIKAAKLE (154 aa)). The active-site Proton donor; for dehydratase activity is the aspartate 1492. Residues 1587–1624 (ANPGSKTKSTNGNALPSVPRSVPAGPTSAPQQVAPTTM) form a disordered region. Polar residues predominate over residues 1588–1600 (NPGSKTKSTNGNA). A Carrier domain is found at 1640–1724 (PSKIADLKSL…PTAALTEGLV (85 aa)). O-(pantetheine 4'-phosphoryl)serine is present on serine 1674. Residues 1734 to 1748 (SDSIRNSTGFHTTIP) are compositionally biased toward polar residues. The segment at 1734–1767 (SDSIRNSTGFHTTIPATPAELHSNPPDSLDGSTV) is disordered. The segment at 1777-2107 (ARFKLDTMVY…YDFLLGELEN (331 aa)) is thioesterase (TE) domain. Catalysis depends on for thioesterase activity residues serine 1897 and aspartate 2045.

The catalysed reaction is 3 malonyl-CoA + acetyl-CoA + 2 H(+) = orsellinate + 3 CO2 + 4 CoA. Its pathway is secondary metabolite biosynthesis; terpenoid biosynthesis. Functionally, non-reducing polyketide synthase; part of the asc-1 gene cluster that mediates the biosynthesis of both ascochlorin and ascofuranone, a strong inhibitor of cyanide-insensitive alternative oxidases and a promising drug candidate against African trypanosomiasis. The first step in the pathway is performed by the non-reducing polyketide synthase ascC that produces orsellinic acid by condensing acetyl-CoA with 3 malonyl-CoA units. Orsellinic acid is then prenylated by the prenyltransferase ascA to yield ilicicolinic acid B. Ilicicolinic acid B is further reduced to ilicicolin B by the reductase ascB. The halogenase ascD then chlorinates ilicicolin B to produce ilicicolin A which is converted to ilicicolin A epoxide by the cytochrome P450 monooxygenase ascE that catalyzes stereoselective epoxidation of the terminal double bond of the prenyl group. Ilicicolin A epoxide is the last common precursor for the biosynthesis of ascofuranone and ascochlorin. The terpene cyclase ascF produces a monocyclic terpene, and the cyclization reaction is proposed to be initiated by protonation of the terminal epoxide of ilicicolin A epoxide to generate a monocyclic tertiarycation, which is followed by a series of hydride and methyl shifts with abstraction of proton, leading to the formation of the (14S,15R,19R)-trimethylcyclohexanone ring structure of ilicicolin C, which is finally reduced to ascochlorin by the dehydrogenase ascG. On the other hand, ilicicolin A epoxide is hydroxylated by the cytochrome P450 monooxygenase ascH, and the resultant product is cyclized by the terpene cyclase ascI to ascofuranol via protonation-initiated epoxide ring opening, which facilitates the 6-endo-tet cyclization to form the tetrahy-drofuran ring. Finally, ascofuranol is oxidized into ascofuranone by ascJ. The polypeptide is Non-reducing polyketide synthase ascC (Acremonium egyptiacum (Oospora egyptiaca)).